A 202-amino-acid chain; its full sequence is Superoxide dismutase [Mn], mitochondrial (202 aa).

Residues His-1–Met-5 constitute a mitochondrion transit peptide. Residue His-31 coordinates Mn(2+). Tyr-39 is subject to 3'-nitrotyrosine. An N6-acetyllysine; alternate modification is found at Lys-49. An N6-succinyllysine; alternate modification is found at Lys-49. His-79 is a Mn(2+) binding site. The residue at position 95 (Lys-95) is an N6-acetyllysine. N6-acetyllysine; alternate occurs at positions 103 and 111. 2 positions are modified to N6-succinyllysine; alternate: Lys-103 and Lys-111. The Mn(2+) site is built by Asp-164 and His-168. Residue Lys-183 is modified to N6-acetyllysine.

This sequence belongs to the iron/manganese superoxide dismutase family. In terms of assembly, homotetramer. Mn(2+) serves as cofactor. In terms of processing, nitrated under oxidative stress. Nitration coupled with oxidation inhibits the catalytic activity. Post-translationally, acetylation at Lys-122 decreases enzymatic activity. Deacetylated by SIRT3 upon exposure to ionizing radiations or after long fasting. Polyubiquitinated; leading to proteasomal degradation. Deubiquitinated by USP36 which increases protein stability.

The protein localises to the mitochondrion matrix. The catalysed reaction is 2 superoxide + 2 H(+) = H2O2 + O2. In terms of biological role, destroys superoxide anion radicals which are normally produced within the cells and which are toxic to biological systems. This Oryctolagus cuniculus (Rabbit) protein is Superoxide dismutase [Mn], mitochondrial (SOD2).